The following is a 320-amino-acid chain: Cytosolic Fe-S cluster assembly factor NUBP1 (320 aa).

Methionine 1 bears the N-acetylmethionine mark. [4Fe-4S] cluster-binding residues include cysteine 8, cysteine 22, cysteine 25, and cysteine 31. 62 to 69 (GKGGVGKS) contacts ATP. 2 residues coordinate [4Fe-4S] cluster: cysteine 235 and cysteine 238. A Phosphoserine modification is found at serine 319.

Belongs to the Mrp/NBP35 ATP-binding proteins family. NUBP1/NBP35 subfamily. In terms of assembly, heterotetramer of 2 NUBP1 and 2 NUBP2 chains. Interacts with KIFC1. Interacts with the BBS/CCT complex subunit CCT1. [4Fe-4S] cluster serves as cofactor.

The protein resides in the cytoplasm. The protein localises to the nucleus. It is found in the cell projection. It localises to the cytoskeleton. Its subcellular location is the cilium axoneme. The protein resides in the cilium basal body. The protein localises to the microtubule organizing center. It is found in the centrosome. It localises to the centriole. Functionally, component of the cytosolic iron-sulfur (Fe/S) protein assembly (CIA) machinery. Required for maturation of extramitochondrial Fe-S proteins. The NUBP1-NUBP2 heterotetramer forms a Fe-S scaffold complex, mediating the de novo assembly of an Fe-S cluster and its transfer to target apoproteins. Implicated in the regulation of centrosome duplication. Negatively regulates cilium formation and structure. This chain is Cytosolic Fe-S cluster assembly factor NUBP1, found in Rattus norvegicus (Rat).